Reading from the N-terminus, the 236-residue chain is Small ribosomal subunit protein bS21m (236 aa).

Residues 65 to 136 (KPAAGAAAGG…SSKPSPMQTW (72 aa)) form a disordered region. A compositionally biased stretch (low complexity) spans 107 to 131 (SNSSTSSSSSSSSSGGALYSSSKPS).

This sequence belongs to the bacterial ribosomal protein bS21 family. As to quaternary structure, component of the mitochondrial small ribosomal subunit (mt-SSU). Mature N.crassa 74S mitochondrial ribosomes consist of a small (37S) and a large (54S) subunit. The 37S small subunit contains a 16S ribosomal RNA (16S mt-rRNA) and 32 different proteins. The 54S large subunit contains a 23S rRNA (23S mt-rRNA) and 42 different proteins.

The protein resides in the mitochondrion. Component of the mitochondrial ribosome (mitoribosome), a dedicated translation machinery responsible for the synthesis of mitochondrial genome-encoded proteins, including at least some of the essential transmembrane subunits of the mitochondrial respiratory chain. The mitoribosomes are attached to the mitochondrial inner membrane and translation products are cotranslationally integrated into the membrane. The chain is Small ribosomal subunit protein bS21m (mrp21) from Neurospora crassa (strain ATCC 24698 / 74-OR23-1A / CBS 708.71 / DSM 1257 / FGSC 987).